Reading from the N-terminus, the 527-residue chain is Inorganic phosphate transporter 1-1 (527 aa).

The Cytoplasmic segment spans residues 1-21; that stretch reads MAGGQLNVLSTLDQAKTQWYH. The helical transmembrane segment at 22 to 42 threads the bilayer; sequence FMAIVIAGMGFFTDAYDLFCI. Residues 43-70 lie on the Extracellular side of the membrane; the sequence is SLVTKLLGRIYYTDDSKDTPGALPPNVS. Residues 71 to 91 traverse the membrane as a helical segment; that stretch reads AAVTGVALCGTLAGQLFFGWL. The Cytoplasmic segment spans residues 92 to 99; sequence GDKLGRKS. A helical membrane pass occupies residues 100 to 120; sequence VYGFTLILMVVCSVASGLSFG. Residues 121–124 are Extracellular-facing; it reads SSAK. The helical transmembrane segment at 125–145 threads the bilayer; sequence GVVSTLCFFRFWLGFGIGGDY. The Cytoplasmic portion of the chain corresponds to 146 to 163; sequence PLSATIMSEYANKRTRGA. A helical membrane pass occupies residues 164 to 184; sequence FIAAVFAMQGFGILFGAIVAL. Topologically, residues 185–211 are extracellular; sequence AVSAGFRHAYPAPSYSDNHAASLVPQA. Residues 212–232 form a helical membrane-spanning segment; the sequence is DYVWRIILMFGTVPAALTYYW. Over 233 to 292 the chain is Cytoplasmic; sequence RMKMPETARYTALIARNAKQAAADMSKVLHTQIEESADRAETVAVGGESWGLFSRQFLRR. The chain crosses the membrane as a helical span at residues 293–313; the sequence is HGLHLLATTSTWFLLDIAFYS. The Extracellular segment spans residues 314–348; sequence QNLFQKDIFSKVGWIPPAKTMNALEELYRIARAQA. Residues 349–369 form a helical membrane-spanning segment; it reads LIALCGTIPGYWFTVAFIEIM. The Cytoplasmic portion of the chain corresponds to 370–371; sequence GR. The helical transmembrane segment at 372-392 threads the bilayer; it reads FWIQIMGFAMMTAFMLGLAIP. At 393 to 405 the chain is on the extracellular side; that stretch reads YHHWTTPGHHTGF. The helical transmembrane segment at 406–426 threads the bilayer; sequence IVMYGFTFFFANFGPNSTTFI. Topologically, residues 427 to 442 are cytoplasmic; the sequence is VPAEIYPARLRSTCHG. Residues 443–463 traverse the membrane as a helical segment; it reads ISAAAGKAGAIIGAFGFLYAA. The Extracellular portion of the chain corresponds to 464–481; sequence QDQHKPEPGYPRGIGIKN. Residues 482 to 502 traverse the membrane as a helical segment; sequence ALFVLAGTNFLGTIMTLLVPE. Residues 503–527 are Cytoplasmic-facing; that stretch reads SKGMSLEVISQEVADGDDEEAAYPK.

Belongs to the major facilitator superfamily. Phosphate:H(+) symporter (TC 2.A.1.9) family. As to expression, expressed in roots, stems and leaves.

Its subcellular location is the membrane. High-affinity transporter for external inorganic phosphate. Required for phosphate acquisition in plant. In Oryza sativa subsp. japonica (Rice), this protein is Inorganic phosphate transporter 1-1 (PHT1-1).